We begin with the raw amino-acid sequence, 77 residues long: Large ribosomal subunit protein bL28 (77 aa).

The protein belongs to the bacterial ribosomal protein bL28 family.

The sequence is that of Large ribosomal subunit protein bL28 from Verminephrobacter eiseniae (strain EF01-2).